The chain runs to 683 residues: DNA ligase (683 aa).

Residues 35–39 (DADYD), 84–85 (SL), and glutamate 115 contribute to the NAD(+) site. Lysine 117 (N6-AMP-lysine intermediate) is an active-site residue. Residues arginine 138, glutamate 175, lysine 293, and lysine 317 each coordinate NAD(+). Zn(2+)-binding residues include cysteine 411, cysteine 414, cysteine 429, and cysteine 435. Residues 598–683 (QTNSAVSGKT…LQNISTGAQQ (86 aa)) enclose the BRCT domain.

The protein belongs to the NAD-dependent DNA ligase family. LigA subfamily. Mg(2+) serves as cofactor. Mn(2+) is required as a cofactor.

The enzyme catalyses NAD(+) + (deoxyribonucleotide)n-3'-hydroxyl + 5'-phospho-(deoxyribonucleotide)m = (deoxyribonucleotide)n+m + AMP + beta-nicotinamide D-nucleotide.. Functionally, DNA ligase that catalyzes the formation of phosphodiester linkages between 5'-phosphoryl and 3'-hydroxyl groups in double-stranded DNA using NAD as a coenzyme and as the energy source for the reaction. It is essential for DNA replication and repair of damaged DNA. The chain is DNA ligase from Nitrosomonas eutropha (strain DSM 101675 / C91 / Nm57).